A 467-amino-acid chain; its full sequence is Glutamate--tRNA ligase (467 aa).

A 'HIGH' region motif is present at residues 9–19 (PSPTGYLHIGG). Positions 237–241 (KLSKR) match the 'KMSKS' region motif. K240 is a binding site for ATP.

Belongs to the class-I aminoacyl-tRNA synthetase family. Glutamate--tRNA ligase type 1 subfamily. Monomer.

The protein localises to the cytoplasm. It catalyses the reaction tRNA(Glu) + L-glutamate + ATP = L-glutamyl-tRNA(Glu) + AMP + diphosphate. In terms of biological role, catalyzes the attachment of glutamate to tRNA(Glu) in a two-step reaction: glutamate is first activated by ATP to form Glu-AMP and then transferred to the acceptor end of tRNA(Glu). This chain is Glutamate--tRNA ligase, found in Stenotrophomonas maltophilia (strain R551-3).